The primary structure comprises 137 residues: ATP synthase epsilon chain (137 aa).

It belongs to the ATPase epsilon chain family. F-type ATPases have 2 components, CF(1) - the catalytic core - and CF(0) - the membrane proton channel. CF(1) has five subunits: alpha(3), beta(3), gamma(1), delta(1), epsilon(1). CF(0) has three main subunits: a, b and c.

The protein resides in the cellular thylakoid membrane. Produces ATP from ADP in the presence of a proton gradient across the membrane. In Trichormus variabilis (strain ATCC 29413 / PCC 7937) (Anabaena variabilis), this protein is ATP synthase epsilon chain.